The primary structure comprises 196 residues: MSRYRGPRLKKIRRLGALPGLTRKTPKSGSNLKKKFYSGKKEQYRIRLQEKQKLRFHYGLTERQLLRYVHIAGKAKKSTGQVLLQLLEMRLDNIVFRLGMASTIPGARQLVNHRHILVNGRIVDIPSFRCKPRDIITTKDNQRSKRLVQNSIASFDPGRLPKHLTVDTLQYKGLVQKILDRKWVGLKINELLFVEY.

Residues 89–150 (MRLDNIVFRL…NQRSKRLVQN (62 aa)) form the S4 RNA-binding domain.

It belongs to the universal ribosomal protein uS4 family. Part of the 30S ribosomal subunit. Contacts protein S5. The interaction surface between S4 and S5 is involved in control of translational fidelity.

It localises to the plastid. It is found in the chloroplast. One of the primary rRNA binding proteins, it binds directly to 16S rRNA where it nucleates assembly of the body of the 30S subunit. Its function is as follows. With S5 and S12 plays an important role in translational accuracy. This Eleusine indica (Goosegrass) protein is Small ribosomal subunit protein uS4c (rps4).